We begin with the raw amino-acid sequence, 204 residues long: Inactive ribonuclease-like protein 9 (204 aa).

Positions 1–26 are cleaved as a signal peptide; it reads MMRTLITIHPLPLLLLLQQLLQPVQF. Disulfide bonds link cysteine 97–cysteine 152, cysteine 115–cysteine 167, and cysteine 122–cysteine 129. Asparagine 130 and asparagine 142 each carry an N-linked (GlcNAc...) asparagine glycan.

Belongs to the pancreatic ribonuclease family.

The protein resides in the secreted. Does not exhibit any ribonuclease activity. In Pongo pygmaeus (Bornean orangutan), this protein is Inactive ribonuclease-like protein 9 (RNASE9).